Reading from the N-terminus, the 150-residue chain is 3-dehydroquinate dehydratase (150 aa).

The active-site Proton acceptor is the Tyr-26. Asn-77, His-83, and Asp-90 together coordinate substrate. His-103 (proton donor) is an active-site residue. Substrate-binding positions include 104–105 (LS) and Arg-114.

This sequence belongs to the type-II 3-dehydroquinase family. In terms of assembly, homododecamer.

The catalysed reaction is 3-dehydroquinate = 3-dehydroshikimate + H2O. Its pathway is metabolic intermediate biosynthesis; chorismate biosynthesis; chorismate from D-erythrose 4-phosphate and phosphoenolpyruvate: step 3/7. In terms of biological role, catalyzes a trans-dehydration via an enolate intermediate. This chain is 3-dehydroquinate dehydratase, found in Sodalis glossinidius (strain morsitans).